We begin with the raw amino-acid sequence, 376 residues long: Glycerol-3-phosphate acyltransferase 9 (376 aa).

Residues 1-78 (MSSTAGRLVT…SNPPEPWNWN (78 aa)) are Cytoplasmic-facing. Serine 13 carries the phosphoserine modification. 3 consecutive transmembrane segments (helical) span residues 79-99 (IYLFPLYCFGVVVRYCILFPL), 102-122 (FTLAFGWIIFLSLFIPVNALL), and 135-155 (VLVEMICSFFVASWTGVVKYH). Residues 156–376 (GPRPSIRPKQ…ESILARLEEK (221 aa)) lie on the Cytoplasmic side of the membrane. The catalytic stretch occupies residues 168–180 (VANHTSMIDFIVL). An HXXXXD motif motif is present at residues 171 to 176 (HTSMID). A sn-glycerol 3-phosphate-binding site is contributed by 209–218 (GCIWFNRSEA). The tract at residues 242 to 262 (IFPEGTCVNNNYTVMFKKGAF) is glycerol-3-phosphate binding. The tract at residues 266-275 (CTVCPIAIKY) is catalytic. The tract at residues 369-373 (ILARL) is endoplasmic reticulum targeting.

The protein belongs to the 1-acyl-sn-glycerol-3-phosphate acyltransferase family. In terms of assembly, self-interacts. Interacts with LPAT2 and LPCAT2. In terms of tissue distribution, up-regulated during embryogenesis. Expressed in seedlings, leaves, stems, roots, floral buds, flowers, pollen, and siliques at various developmental stages.

It is found in the endoplasmic reticulum membrane. The catalysed reaction is sn-glycerol 3-phosphate + an acyl-CoA = a 1-acyl-sn-glycero-3-phosphate + CoA. It participates in glycerolipid metabolism; triacylglycerol biosynthesis. Its function is as follows. Essential protein. Required for male and female gametophytes development. Exhibits sn-1 acyltransferase activity with high specificity for acyl-coenzyme A, thus triggering storage lipid biosynthesis and playing an important role in the Kennedy pathway of glycerolipid biosynthesis. Catalyzes triacylglycerol (TAG) accumulation involved in membrane lipid and oil biosynthesis, especially in seeds. Also contributes to the biosynthesis of both polar lipids and TAG in developing leaves, as well as lipid droplet production in developing pollen grains. Seems to not contribute to surface lipid biosynthesis (e.g. waxes and cutin). This is Glycerol-3-phosphate acyltransferase 9 from Arabidopsis thaliana (Mouse-ear cress).